A 290-amino-acid polypeptide reads, in one-letter code: 4-diphosphocytidyl-2-C-methyl-D-erythritol kinase (290 aa).

Lysine 13 is a catalytic residue. 96–106 lines the ATP pocket; sequence PMGGGIGGGSS. The active site involves aspartate 138.

The protein belongs to the GHMP kinase family. IspE subfamily.

The enzyme catalyses 4-CDP-2-C-methyl-D-erythritol + ATP = 4-CDP-2-C-methyl-D-erythritol 2-phosphate + ADP + H(+). The protein operates within isoprenoid biosynthesis; isopentenyl diphosphate biosynthesis via DXP pathway; isopentenyl diphosphate from 1-deoxy-D-xylulose 5-phosphate: step 3/6. Functionally, catalyzes the phosphorylation of the position 2 hydroxy group of 4-diphosphocytidyl-2C-methyl-D-erythritol. The polypeptide is 4-diphosphocytidyl-2-C-methyl-D-erythritol kinase (Vibrio vulnificus (strain CMCP6)).